A 147-amino-acid chain; its full sequence is UPF0208 membrane protein CGSHiEE_06015 (147 aa).

2 consecutive transmembrane segments (helical) span residues 38 to 58 (FAQK…QIYA) and 67 to 87 (IAIL…YWLG).

It belongs to the UPF0208 family.

It localises to the cell inner membrane. The chain is UPF0208 membrane protein CGSHiEE_06015 from Haemophilus influenzae (strain PittEE).